Consider the following 1039-residue polypeptide: MQVMPPNPGGGPSRLFILRPVATTLLMVAILLAGIIGYRALPVSALPEVDYPTIQVVTLYPGASPDVVTSAITAPLERQFGQMSGLKQMASQSSGGASVVTLQFQLELPLDVAEQEVQAAINSATNLLPSDLPYPPIYSKVNPADPPILTLAVTSSAMPMTQVEDMVETRVAQKISQVTGVGLVTISGGQRPAVRVKLNAAAVAAYGLDSETIRTAISNANVNSAKGSLDGPTRSVTLSANDQMKSADDYRQLIVAYQNGAAIRLQDIATIEQGAENTRLAAWANKQPAIVLNIQRQPGVNVITTADSIREMLPQLIKSLPKSVDVKVLTDRTTTIRASVSDVQFELLLAVALVVMVIYVFLRNVPATIIPSVAVPLSLIGTFAAMYFLGFSINNLTLMALTIATGFVVDDAIVVIENISRYIEKGEKPLDAALKGAGEIGFTIISLTFSLVAVLIPLLFMGDIVGRLFREFAVTLAVAILISAVVSLTLTPMMCARMLSHESLRKQNRFSAASERFFDRVIARYGKWLKTVLNHPWLTLGVAFSTLLLTVLLYLLIPKGFFPVQDNGIIQGTLEAPQSVSFSNMAERQQQVAAEILKDPAVESLTSFVGVDGTNATLNSGRLQINLKPLSERSERIPAIITRLQQMSTQFPGVKLYLQPVQDLTIDTQVSRTQYQFTLQAMSLDDLSLWVPKLMAELQQTPQLADVTSNWQDQGLVAYVNVDRDSASRLGISMSDVDNALYNAFGQRLISTIYTQANQYRVVLEHDVSTTPGLAALNDIRLTSSNGTIVPLSTIAKIEQRFGPLSVNHLDQFPAATISFNVAGNYSLGEAVDAITLAEKNLNLPKDITTQFQGATLAFQAALGGTLWLILAAVVAMYIVLGVLYESFIHPVTILSTLPTAGVGALLALMMAGSELDVIAIIGIILLIGIVKKNAIMMIDFALAAEREQGMTPYDAIYQACLLRFRPILMTTLAALLGALPLMLSTGVGAELRHPLGVCMVGGLVMSQILTLFTTPVIYLLFDKLARNTRRQPDAQELP.

A run of 12 helical transmembrane segments spans residues 16 to 36 (FILR…AGII), 342 to 362 (DVQF…YVFL), 373 to 393 (VAVP…GFSI), 396 to 416 (LTLM…IVVI), 440 to 460 (IGFT…PLLF), 472 to 492 (FAVT…TLTP), 537 to 557 (WLTL…YLLI), 863 to 883 (LGGT…VLGV), 888 to 908 (FIHP…ALLA), 911 to 931 (MAGS…IGIV), 968 to 988 (ILMT…STGV), and 1002 to 1022 (GGLV…YLLF).

This sequence belongs to the resistance-nodulation-cell division (RND) (TC 2.A.6) family. MdtB subfamily. As to quaternary structure, part of a tripartite efflux system composed of MdtA, MdtB and MdtC. MdtB forms a heteromultimer with MdtC.

It is found in the cell inner membrane. In Serratia proteamaculans (strain 568), this protein is Multidrug resistance protein MdtB.